We begin with the raw amino-acid sequence, 217 residues long: D-methionine transport system permease protein MetI (217 aa).

Residues 13–204 (VWETLMMTFV…LLVILVYLIQ (192 aa)) form the ABC transmembrane type-1 domain. The next 5 helical transmembrane spans lie at 20–40 (TFVS…LLYV), 58–78 (GVVN…MIPF), 81–101 (MIVG…VGAA), 152–172 (ITLI…AGGL), and 186–206 (ATVM…IQLS).

Belongs to the binding-protein-dependent transport system permease family. CysTW subfamily.

It is found in the cell inner membrane. Its function is as follows. Part of the binding-protein-dependent transport system for D-methionine and the toxic methionine analog alpha-methyl-methionine. Probably responsible for the translocation of the substrate across the membrane. The polypeptide is D-methionine transport system permease protein MetI (metI) (Yersinia pestis).